A 200-amino-acid chain; its full sequence is MARYTGPAWKLSRRLGISLSGTGKELEKRPYAPGPHGPNQRKKLSEYGLQLQEKQKLRHMYGMTERQFRRTFDQAGKMPGKHGENFMILLEARLDNLVYRMGLARTRRAARQLVNHGHIMVDGARVDIPSYRVKPGQTISVREKSRNLAVIKEAMEVNNFVPEYLTFDADKLEATFTRHAERAELPAEINEALIVEFYSR.

The tract at residues 22–42 (TGKELEKRPYAPGPHGPNQRK) is disordered. One can recognise an S4 RNA-binding domain in the interval 92–152 (ARLDNLVYRM…EKSRNLAVIK (61 aa)).

Belongs to the universal ribosomal protein uS4 family. Part of the 30S ribosomal subunit. Contacts protein S5. The interaction surface between S4 and S5 is involved in control of translational fidelity.

Its function is as follows. One of the primary rRNA binding proteins, it binds directly to 16S rRNA where it nucleates assembly of the body of the 30S subunit. With S5 and S12 plays an important role in translational accuracy. This chain is Small ribosomal subunit protein uS4, found in Bacillus cytotoxicus (strain DSM 22905 / CIP 110041 / 391-98 / NVH 391-98).